Consider the following 877-residue polypeptide: Leucine--tRNA ligase (877 aa).

The 'HIGH' region signature appears at 50–60; it reads PYPSGKLHMGH. The 'KMSKS' region signature appears at 634-638; the sequence is KMSKS. Residue K637 coordinates ATP.

Belongs to the class-I aminoacyl-tRNA synthetase family.

It is found in the cytoplasm. The enzyme catalyses tRNA(Leu) + L-leucine + ATP = L-leucyl-tRNA(Leu) + AMP + diphosphate. This chain is Leucine--tRNA ligase, found in Hydrogenovibrio crunogenus (strain DSM 25203 / XCL-2) (Thiomicrospira crunogena).